Consider the following 474-residue polypeptide: tRNA-2-methylthio-N(6)-dimethylallyladenosine synthase (474 aa).

Residues 3–120 enclose the MTTase N-terminal domain; it reads QKLHIKTWGC…LPEMINQIRA (118 aa). 6 residues coordinate [4Fe-4S] cluster: Cys12, Cys49, Cys83, Cys157, Cys161, and Cys164. The Radical SAM core domain maps to 143-375; that stretch reads KAEGPTAFVS…QQRINNQAAQ (233 aa). Positions 378–441 constitute a TRAM domain; sequence RAMLGTEQRV…TNSLRGDVVR (64 aa).

It belongs to the methylthiotransferase family. MiaB subfamily. As to quaternary structure, monomer. It depends on [4Fe-4S] cluster as a cofactor.

It is found in the cytoplasm. The catalysed reaction is N(6)-dimethylallyladenosine(37) in tRNA + (sulfur carrier)-SH + AH2 + 2 S-adenosyl-L-methionine = 2-methylsulfanyl-N(6)-dimethylallyladenosine(37) in tRNA + (sulfur carrier)-H + 5'-deoxyadenosine + L-methionine + A + S-adenosyl-L-homocysteine + 2 H(+). Its function is as follows. Catalyzes the methylthiolation of N6-(dimethylallyl)adenosine (i(6)A), leading to the formation of 2-methylthio-N6-(dimethylallyl)adenosine (ms(2)i(6)A) at position 37 in tRNAs that read codons beginning with uridine. The chain is tRNA-2-methylthio-N(6)-dimethylallyladenosine synthase from Mannheimia succiniciproducens (strain KCTC 0769BP / MBEL55E).